The following is a 203-amino-acid chain: dITP/XTP pyrophosphatase (203 aa).

7-12 (TGNRDK) lines the substrate pocket. The Proton acceptor role is filled by Asp-73. Asp-73 serves as a coordination point for Mg(2+). Substrate is bound by residues Ser-74, 155-158 (FGYD), Lys-178, and 183-184 (HR).

Belongs to the HAM1 NTPase family. In terms of assembly, homodimer. It depends on Mg(2+) as a cofactor.

It catalyses the reaction XTP + H2O = XMP + diphosphate + H(+). The enzyme catalyses dITP + H2O = dIMP + diphosphate + H(+). It carries out the reaction ITP + H2O = IMP + diphosphate + H(+). Pyrophosphatase that catalyzes the hydrolysis of nucleoside triphosphates to their monophosphate derivatives, with a high preference for the non-canonical purine nucleotides XTP (xanthosine triphosphate), dITP (deoxyinosine triphosphate) and ITP. Seems to function as a house-cleaning enzyme that removes non-canonical purine nucleotides from the nucleotide pool, thus preventing their incorporation into DNA/RNA and avoiding chromosomal lesions. This chain is dITP/XTP pyrophosphatase, found in Wolinella succinogenes (strain ATCC 29543 / DSM 1740 / CCUG 13145 / JCM 31913 / LMG 7466 / NCTC 11488 / FDC 602W) (Vibrio succinogenes).